Reading from the N-terminus, the 260-residue chain is Phosphate import ATP-binding protein PstB 5 (260 aa).

The ABC transporter domain maps to isoleucine 9 to valine 255. Position 41 to 48 (glycine 41 to serine 48) interacts with ATP.

It belongs to the ABC transporter superfamily. Phosphate importer (TC 3.A.1.7) family. The complex is composed of two ATP-binding proteins (PstB), two transmembrane proteins (PstC and PstA) and a solute-binding protein (PstS).

It localises to the cell inner membrane. It catalyses the reaction phosphate(out) + ATP + H2O = ADP + 2 phosphate(in) + H(+). Part of the ABC transporter complex PstSACB involved in phosphate import. Responsible for energy coupling to the transport system. The polypeptide is Phosphate import ATP-binding protein PstB 5 (Trichormus variabilis (strain ATCC 29413 / PCC 7937) (Anabaena variabilis)).